The sequence spans 163 residues: Crossover junction endodeoxyribonuclease RuvC (163 aa).

Catalysis depends on residues aspartate 8, glutamate 68, and aspartate 140. 3 residues coordinate Mg(2+): aspartate 8, glutamate 68, and aspartate 140.

It belongs to the RuvC family. As to quaternary structure, homodimer which binds Holliday junction (HJ) DNA. The HJ becomes 2-fold symmetrical on binding to RuvC with unstacked arms; it has a different conformation from HJ DNA in complex with RuvA. In the full resolvosome a probable DNA-RuvA(4)-RuvB(12)-RuvC(2) complex forms which resolves the HJ. It depends on Mg(2+) as a cofactor.

Its subcellular location is the cytoplasm. It catalyses the reaction Endonucleolytic cleavage at a junction such as a reciprocal single-stranded crossover between two homologous DNA duplexes (Holliday junction).. Functionally, the RuvA-RuvB-RuvC complex processes Holliday junction (HJ) DNA during genetic recombination and DNA repair. Endonuclease that resolves HJ intermediates. Cleaves cruciform DNA by making single-stranded nicks across the HJ at symmetrical positions within the homologous arms, yielding a 5'-phosphate and a 3'-hydroxyl group; requires a central core of homology in the junction. The consensus cleavage sequence is 5'-(A/T)TT(C/G)-3'. Cleavage occurs on the 3'-side of the TT dinucleotide at the point of strand exchange. HJ branch migration catalyzed by RuvA-RuvB allows RuvC to scan DNA until it finds its consensus sequence, where it cleaves and resolves the cruciform DNA. The protein is Crossover junction endodeoxyribonuclease RuvC of Erythrobacter litoralis (strain HTCC2594).